We begin with the raw amino-acid sequence, 295 residues long: Glycine--tRNA ligase alpha subunit (295 aa).

The protein belongs to the class-II aminoacyl-tRNA synthetase family. As to quaternary structure, tetramer of two alpha and two beta subunits.

The protein resides in the cytoplasm. The catalysed reaction is tRNA(Gly) + glycine + ATP = glycyl-tRNA(Gly) + AMP + diphosphate. This Bacillus licheniformis (strain ATCC 14580 / DSM 13 / JCM 2505 / CCUG 7422 / NBRC 12200 / NCIMB 9375 / NCTC 10341 / NRRL NRS-1264 / Gibson 46) protein is Glycine--tRNA ligase alpha subunit.